A 169-amino-acid polypeptide reads, in one-letter code: Co-chaperone protein HscB homolog (169 aa).

The region spanning 2–74 (NYFDLFSLPV…CLRAQYLLLL (73 aa)) is the J domain.

Belongs to the HscB family. Interacts with HscA and stimulates its ATPase activity.

Functionally, co-chaperone involved in the maturation of iron-sulfur cluster-containing proteins. Seems to help targeting proteins to be folded toward HscA. The protein is Co-chaperone protein HscB homolog of Psychromonas ingrahamii (strain DSM 17664 / CCUG 51855 / 37).